We begin with the raw amino-acid sequence, 72 residues long: UPF0352 protein Patl_3379 (72 aa).

This sequence belongs to the UPF0352 family.

In Pseudoalteromonas atlantica (strain T6c / ATCC BAA-1087), this protein is UPF0352 protein Patl_3379.